We begin with the raw amino-acid sequence, 156 residues long: Ribosomal RNA large subunit methyltransferase H (156 aa).

S-adenosyl-L-methionine contacts are provided by residues Leu-73, Gly-104, and 123 to 128 (LSPLTL).

The protein belongs to the RNA methyltransferase RlmH family. As to quaternary structure, homodimer.

It localises to the cytoplasm. The enzyme catalyses pseudouridine(1915) in 23S rRNA + S-adenosyl-L-methionine = N(3)-methylpseudouridine(1915) in 23S rRNA + S-adenosyl-L-homocysteine + H(+). Functionally, specifically methylates the pseudouridine at position 1915 (m3Psi1915) in 23S rRNA. This is Ribosomal RNA large subunit methyltransferase H from Aliivibrio fischeri (strain MJ11) (Vibrio fischeri).